The primary structure comprises 179 residues: ATP synthase subunit delta (179 aa).

Belongs to the ATPase delta chain family. In terms of assembly, F-type ATPases have 2 components, F(1) - the catalytic core - and F(0) - the membrane proton channel. F(1) has five subunits: alpha(3), beta(3), gamma(1), delta(1), epsilon(1). F(0) has three main subunits: a(1), b(2) and c(10-14). The alpha and beta chains form an alternating ring which encloses part of the gamma chain. F(1) is attached to F(0) by a central stalk formed by the gamma and epsilon chains, while a peripheral stalk is formed by the delta and b chains.

It is found in the cell membrane. In terms of biological role, f(1)F(0) ATP synthase produces ATP from ADP in the presence of a proton or sodium gradient. F-type ATPases consist of two structural domains, F(1) containing the extramembraneous catalytic core and F(0) containing the membrane proton channel, linked together by a central stalk and a peripheral stalk. During catalysis, ATP synthesis in the catalytic domain of F(1) is coupled via a rotary mechanism of the central stalk subunits to proton translocation. Its function is as follows. This protein is part of the stalk that links CF(0) to CF(1). It either transmits conformational changes from CF(0) to CF(1) or is implicated in proton conduction. The sequence is that of ATP synthase subunit delta from Natranaerobius thermophilus (strain ATCC BAA-1301 / DSM 18059 / JW/NM-WN-LF).